We begin with the raw amino-acid sequence, 90 residues long: Heat shock protein beta-7 (90 aa).

The 52-residue stretch at 39–90 (PLTFPARPGGQGNIKTLGDAYEFTVDMRDFSPEDIIVTTSNNHIEVRAEKKP) folds into the sHSP domain.

Belongs to the small heat shock protein (HSP20) family. Interacts with C-terminal domain of actin-binding protein 280. Found in both cardiac and skeletal muscle.

Its subcellular location is the cytoplasm. The protein resides in the nucleus. It is found in the cajal body. The chain is Heat shock protein beta-7 (Hspb7) from Rattus norvegicus (Rat).